The sequence spans 312 residues: MSVLNNSEVKLFLLIGIPGLEHAHIWFSIPICLMYLLAIMGNCTILFIIKTEPSLHEPMYYFLAMLAVSDMGLSLSSLPTMLRVFLFNAMGISPNACFAQEFFIHGFTVMESSVLLIMSLDRFLAIHNPLRYSSILTSNRVAKMGLILAIRSILLVIPFPFTLRRLKYCQKNLLSHSYCLHQDTMKLACSDNKTNVIYGFFIALCTMLDLALIVLSYVLILKTILSIASLAERLKALNTCVSHICAVLTFYVPIITLAAMHHFAKHKSPLVVILIADMFLLVPPLMNPIVYCVKTRQIWEKILGKLLNVCGR.

Residues Met-1 to Ile-25 are Extracellular-facing. Residue Asn-5 is glycosylated (N-linked (GlcNAc...) asparagine). The chain crosses the membrane as a helical span at residues Trp-26 to Leu-46. Topologically, residues Phe-47–Ser-54 are cytoplasmic. The chain crosses the membrane as a helical span at residues Leu-55–Leu-75. The Extracellular portion of the chain corresponds to Ser-76–Ala-99. Cys-97 and Cys-189 are oxidised to a cystine. Residues Gln-100–Leu-120 form a helical membrane-spanning segment. The Cytoplasmic portion of the chain corresponds to Asp-121–Asn-139. The chain crosses the membrane as a helical span at residues Arg-140 to Pro-160. At Phe-161 to Val-196 the chain is on the extracellular side. The N-linked (GlcNAc...) asparagine glycan is linked to Asn-192. A helical transmembrane segment spans residues Ile-197 to Ser-216. The Cytoplasmic portion of the chain corresponds to Tyr-217–Ala-236. The chain crosses the membrane as a helical span at residues Leu-237–Leu-257. The Extracellular segment spans residues Ala-258–Val-272. A helical transmembrane segment spans residues Ile-273–Val-293. The Cytoplasmic portion of the chain corresponds to Lys-294 to Arg-312.

This sequence belongs to the G-protein coupled receptor 1 family.

The protein localises to the cell membrane. In terms of biological role, odorant receptor. The sequence is that of Olfactory receptor 51A7 (OR51A7) from Homo sapiens (Human).